The sequence spans 218 residues: Elongation factor Ts (218 aa).

Residues 82 to 85 (TDFV) form an involved in Mg(2+) ion dislocation from EF-Tu region.

Belongs to the EF-Ts family.

The protein resides in the cytoplasm. Associates with the EF-Tu.GDP complex and induces the exchange of GDP to GTP. It remains bound to the aminoacyl-tRNA.EF-Tu.GTP complex up to the GTP hydrolysis stage on the ribosome. The chain is Elongation factor Ts from Prochlorococcus marinus (strain MIT 9211).